The following is a 265-amino-acid chain: 3-methyl-2-oxobutanoate hydroxymethyltransferase (265 aa).

2 residues coordinate Mg(2+): D43 and D82. 3-methyl-2-oxobutanoate contacts are provided by residues 43–44 (DS), D82, and K111. E113 lines the Mg(2+) pocket. Catalysis depends on E180, which acts as the Proton acceptor.

Belongs to the PanB family. Homodecamer; pentamer of dimers. Mg(2+) is required as a cofactor.

The protein localises to the cytoplasm. The enzyme catalyses 3-methyl-2-oxobutanoate + (6R)-5,10-methylene-5,6,7,8-tetrahydrofolate + H2O = 2-dehydropantoate + (6S)-5,6,7,8-tetrahydrofolate. The protein operates within cofactor biosynthesis; (R)-pantothenate biosynthesis; (R)-pantoate from 3-methyl-2-oxobutanoate: step 1/2. Catalyzes the reversible reaction in which hydroxymethyl group from 5,10-methylenetetrahydrofolate is transferred onto alpha-ketoisovalerate to form ketopantoate. This is 3-methyl-2-oxobutanoate hydroxymethyltransferase from Francisella tularensis subsp. holarctica (strain OSU18).